The chain runs to 441 residues: Amino-acid acetyltransferase (441 aa).

Positions 295–434 constitute an N-acetyltransferase domain; the sequence is EQVRRATIND…QELYNYQRRS (140 aa).

It belongs to the acetyltransferase family. ArgA subfamily. Homohexamer.

It is found in the cytoplasm. The enzyme catalyses L-glutamate + acetyl-CoA = N-acetyl-L-glutamate + CoA + H(+). It participates in amino-acid biosynthesis; L-arginine biosynthesis; N(2)-acetyl-L-ornithine from L-glutamate: step 1/4. This chain is Amino-acid acetyltransferase, found in Yersinia pseudotuberculosis serotype O:1b (strain IP 31758).